Here is a 193-residue protein sequence, read N- to C-terminus: DNA damage-inducible transcript 4-like protein (193 aa).

The protein belongs to the DDIT4 family.

The protein localises to the cytoplasm. Its function is as follows. Inhibits cell growth by regulating the TOR signaling pathway upstream of the TSC1-TSC2 complex and downstream of AKT1. In Bos taurus (Bovine), this protein is DNA damage-inducible transcript 4-like protein (DDIT4L).